The sequence spans 171 residues: Co-chaperone protein HscB homolog (171 aa).

Positions 2-74 (NHFELFGLPS…ISRAEYILAE (73 aa)) constitute a J domain.

Belongs to the HscB family. In terms of assembly, interacts with HscA and stimulates its ATPase activity.

Functionally, co-chaperone involved in the maturation of iron-sulfur cluster-containing proteins. Seems to help targeting proteins to be folded toward HscA. This Vibrio campbellii (strain ATCC BAA-1116) protein is Co-chaperone protein HscB homolog.